Reading from the N-terminus, the 220-residue chain is Peptide methionine sulfoxide reductase MsrA (220 aa).

The active site involves C59.

The protein belongs to the MsrA Met sulfoxide reductase family.

It carries out the reaction L-methionyl-[protein] + [thioredoxin]-disulfide + H2O = L-methionyl-(S)-S-oxide-[protein] + [thioredoxin]-dithiol. The enzyme catalyses [thioredoxin]-disulfide + L-methionine + H2O = L-methionine (S)-S-oxide + [thioredoxin]-dithiol. Functionally, has an important function as a repair enzyme for proteins that have been inactivated by oxidation. Catalyzes the reversible oxidation-reduction of methionine sulfoxide in proteins to methionine. The chain is Peptide methionine sulfoxide reductase MsrA from Corynebacterium kroppenstedtii (strain DSM 44385 / JCM 11950 / CIP 105744 / CCUG 35717).